The sequence spans 329 residues: GTPase Obg (329 aa).

The 159-residue stretch at 1-159 folds into the Obg domain; that stretch reads MQFIDQAIID…WSLQLELKLL (159 aa). Residues 160–328 enclose the OBG-type G domain; it reads AEVGIIGLPN…LLSSIWNELG (169 aa). ATP contacts are provided by residues 166 to 173, 191 to 195, 213 to 216, 280 to 283, and 309 to 311; these read GLPNAGKS, FTTLI, DIPG, NKKE, and SAV. 2 residues coordinate Mg(2+): Ser173 and Thr193.

The protein belongs to the TRAFAC class OBG-HflX-like GTPase superfamily. OBG GTPase family. Monomer. Mg(2+) serves as cofactor.

It localises to the cytoplasm. Its function is as follows. An essential GTPase which binds GTP, GDP and possibly (p)ppGpp with moderate affinity, with high nucleotide exchange rates and a fairly low GTP hydrolysis rate. Plays a role in control of the cell cycle, stress response, ribosome biogenesis and in those bacteria that undergo differentiation, in morphogenesis control. This chain is GTPase Obg, found in Prochlorococcus marinus (strain NATL2A).